The sequence spans 403 residues: Peroxisomal membrane protein PEX13 (403 aa).

Residues 1–11 are compositionally biased toward pro residues; it reads MASQPPPPPKP. Positions 1 to 69 are disordered; that stretch reads MASQPPPPPK…SQQTGGNNVN (69 aa). Residues 1–134 are Peroxisomal matrix-facing; it reads MASQPPPPPK…SSRGAFQSIE (134 aa). Over residues 59 to 69 the composition is skewed to polar residues; the sequence is PSQQTGGNNVN. A helical transmembrane segment spans residues 135–155; that stretch reads SIVHAFASVSMMMDATFSAVY. The tract at residues 145-233 is targeting to peroxisomes; that stretch reads MMMDATFSAV…EDQANNSAKS (89 aa). Over 156–174 the chain is Cytoplasmic; that stretch reads NSFRAVLDVANHFSRLKIH. The helical transmembrane segment at 175–192 threads the bilayer; the sequence is FTKVFSAFALVRTIRYLY. Residues 175-196 form an interaction with PEX19 region; that stretch reads FTKVFSAFALVRTIRYLYRRLQ. Topologically, residues 193–233 are peroxisomal matrix; that stretch reads RRLQWMMGLRRGSENEDLWAESEGTVACLGAEDQANNSAKS. The helical transmembrane segment at 234-254 threads the bilayer; sequence WPIFLFFAVILGGPYLIWKLL. Over 255–403 the chain is Cytoplasmic; it reads STHSDEVTDS…TGKNGDKQDL (149 aa). Residues 272–336 enclose the SH3 domain; sequence DDHVVARAEY…PANYVKILGK (65 aa). 2 disordered regions span residues 341–364 and 381–403; these read KTVESSTMPKQQQSFTNPTSVKGV and FVETNKVAGTPDSTGKNGDKQDL. Over residues 344-364 the composition is skewed to polar residues; sequence ESSTMPKQQQSFTNPTSVKGV.

The protein belongs to the peroxin-13 family. In terms of assembly, interacts (via SH3 domain) with PEX14 (via SH3-binding motif); forming the PEX13-PEX14 docking complex. Interacts with PEX19.

The protein localises to the peroxisome membrane. Functionally, component of the PEX13-PEX14 docking complex, a translocon channel that specifically mediates the import of peroxisomal cargo proteins bound to PEX5 receptor. The PEX13-PEX14 docking complex forms a large import pore which can be opened to a diameter of about 9 nm. Mechanistically, PEX5 receptor along with cargo proteins associates with the PEX14 subunit of the PEX13-PEX14 docking complex in the cytosol, leading to the insertion of the receptor into the organelle membrane with the concomitant translocation of the cargo into the peroxisome matrix. Involved in the import of PTS1- and PTS2-type containing proteins. The protein is Peroxisomal membrane protein PEX13 of Rattus norvegicus (Rat).